A 308-amino-acid polypeptide reads, in one-letter code: HTH-type transcriptional activator AllS (308 aa).

The HTH lysR-type domain occupies 2 to 59; that stretch reads FDPETLRTFIAVAETGSFSKAAERLCKTTATISYRIKLLEENTGVALFFRTTRSVTLT. A DNA-binding region (H-T-H motif) is located at residues 19–38; the sequence is FSKAAERLCKTTATISYRIK.

This sequence belongs to the LysR transcriptional regulatory family.

Functionally, positive regulator essential for the expression of AllD operon. Binds to the AllD promoter. This Escherichia coli O157:H7 protein is HTH-type transcriptional activator AllS (allS).